The following is a 218-amino-acid chain: Thiopurine S-methyltransferase (218 aa).

Residues Trp-10, Leu-45, Glu-66, and Arg-123 each contribute to the S-adenosyl-L-methionine site.

This sequence belongs to the class I-like SAM-binding methyltransferase superfamily. TPMT family.

The protein resides in the cytoplasm. It carries out the reaction S-adenosyl-L-methionine + a thiopurine = S-adenosyl-L-homocysteine + a thiopurine S-methylether.. The polypeptide is Thiopurine S-methyltransferase (Pseudomonas aeruginosa (strain LESB58)).